The primary structure comprises 525 residues: GMP synthase [glutamine-hydrolyzing] (525 aa).

One can recognise a Glutamine amidotransferase type-1 domain in the interval 8–206 (PLLILDFGSQ…VVDICKASTD (199 aa)). The active-site Nucleophile is Cys-85. Catalysis depends on residues His-180 and Glu-182. The 194-residue stretch at 207–400 (WTPEHIIDEA…LGLPHDMVYR (194 aa)) folds into the GMPS ATP-PPase domain. Residue 234–240 (SGGVDSS) coordinates ATP.

In terms of assembly, homodimer.

The enzyme catalyses XMP + L-glutamine + ATP + H2O = GMP + L-glutamate + AMP + diphosphate + 2 H(+). It functions in the pathway purine metabolism; GMP biosynthesis; GMP from XMP (L-Gln route): step 1/1. Its function is as follows. Catalyzes the synthesis of GMP from XMP. The protein is GMP synthase [glutamine-hydrolyzing] of Legionella pneumophila (strain Paris).